We begin with the raw amino-acid sequence, 278 residues long: uncharacterized protein (278 aa).

A compositionally biased stretch (basic and acidic residues) spans 1–11; it reads MMIHIHQDKKM. 2 disordered regions span residues 1-107 and 206-278; these read MMIH…RYFK and KVSA…KASR. Residues 62 to 94 are compositionally biased toward low complexity; that stretch reads KQSGGKNAKSGSKSAKSGSKSAKSGSKTSKTQS. Positions 97-107 are enriched in basic and acidic residues; it reads KGDESRDRYFK. A compositionally biased stretch (polar residues) spans 249-260; the sequence is SAKNAKSTGNKK. Residues 264–278 are compositionally biased toward low complexity; the sequence is KSAGAKKAPAAKASR.

This is an uncharacterized protein from Acanthamoeba polyphaga mimivirus (APMV).